A 397-amino-acid chain; its full sequence is MEPRGTKRKAEKTEVEKPLNKLPRAVPSLRTQPSLYSGPFPFYRRPSELGCFSLDAQRQYHGDARALRYYSPPPINGPGPDFDLRDGYPDRYQPRDEEVQERLDHLLRWVLEHRNQLEGGPGWLAGATVTWRGHLTKLLTTPYERQEGWQLAASRFQGTLYLSEVETPAARAQRLARPPLLRELMYMGYKFEQYMCADKPGGSPDPSGEVNTNVAYCSVLRSRLGNHPLLFSGEVDCLNPQAPCTQPPSCYVELKTSKEMHSPGQWRSFYRHKLLKWWAQSFLPGVPHVVAGFRNPEGFVCSLKTFPTMEMFENVRNDREGWNPSVCMNFCAAFLSFAQSTVVQDDPRLVHLFSWEPGGPVTVSVHRDAPYAFLPSWYVETMTQDLPPLSKTPSPKD.

The segment covering 1 to 10 has biased composition (basic residues); it reads MEPRGTKRKA. A disordered region spans residues 1 to 30; sequence MEPRGTKRKAEKTEVEKPLNKLPRAVPSLR. Residues R58, E101, and 131–133 contribute to the substrate site; that span reads WRG. Residue M185 participates in adenosine 3',5'-bisphosphate binding. E192 is a binding site for Mg(2+). 2 residues coordinate substrate: C217 and E234. Mg(2+)-binding residues include E234, D236, E253, and L254. D236 lines the adenosine 3',5'-bisphosphate pocket. Residues 253–256 are adenosine 3',5'-bisphosphate; inhibitor; the sequence is ELKT. K255 and Q280 together coordinate substrate. Residue Q280 participates in adenosine 3',5'-bisphosphate binding. T392 bears the Phosphothreonine mark. S394 carries the phosphoserine modification.

It belongs to the DXO/Dom3Z family. Mg(2+) serves as cofactor.

The protein resides in the nucleus. It carries out the reaction a 5'-end triphospho-ribonucleoside in mRNA + H2O = a 5'-end phospho-ribonucleoside in mRNA + diphosphate + H(+). The catalysed reaction is a 5'-end NAD(+)-phospho-ribonucleoside in mRNA + H2O = a 5'-end phospho-ribonucleoside in mRNA + NAD(+) + H(+). The enzyme catalyses a 5'-end NAD(+)-phospho-ribonucleoside in snoRNA + H2O = a 5'-end phospho-ribonucleoside in snoRNA + NAD(+) + H(+). It catalyses the reaction a 5'-end (N(7)-methyl 5'-triphosphoguanosine)-ribonucleoside-ribonucleotide in mRNA + H2O = a (N(7)-methyl 5'-triphosphoguanosine)-nucleoside + a 5'-end phospho-ribonucleoside in mRNA + H(+). It carries out the reaction a 5'-end FAD-phospho-ribonucleoside in mRNA + H2O = a 5'-end phospho-ribonucleoside in mRNA + FAD + H(+). The catalysed reaction is a 5'-end CoA-ribonucleoside in mRNA + H2O = 3'-dephospho-CoA + a 5'-end phospho-ribonucleoside in mRNA + H(+). Its activity is regulated as follows. The 5'-3' exoribonuclease activity is inhibited by adenosine 3',5'-bisphosphate. Decapping enzyme for NAD-capped RNAs: specifically hydrolyzes the nicotinamide adenine dinucleotide (NAD) cap from a subset of RNAs by removing the entire NAD moiety from the 5'-end of an NAD-capped RNA. The NAD-cap is present at the 5'-end of some RNAs and snoRNAs. In contrast to the canonical 5'-end N7 methylguanosine (m7G) cap, the NAD cap promotes mRNA decay. Preferentially acts on NAD-capped transcripts in response to environmental stress. Also acts as a non-canonical decapping enzyme that removes the entire cap structure of m7G capped or incompletely capped RNAs and mediates their subsequent degradation. Specifically degrades pre-mRNAs with a defective 5'-end m7G cap and is part of a pre-mRNA capping quality control. Has decapping activity toward incomplete 5'-end m7G cap mRNAs such as unmethylated 5'-end-capped RNA (cap0), while it has no activity toward 2'-O-ribose methylated m7G cap (cap1). In contrast to canonical decapping enzymes DCP2 and NUDT16, which cleave the cap within the triphosphate linkage, the decapping activity releases the entire cap structure GpppN and a 5'-end monophosphate RNA. Also has 5'-3' exoribonuclease activities: The 5'-end monophosphate RNA is then degraded by the 5'-3' exoribonuclease activity, enabling this enzyme to decap and degrade incompletely capped mRNAs. Also possesses RNA 5'-pyrophosphohydrolase activity by hydrolyzing the 5'-end triphosphate to release pyrophosphates. Exhibits decapping activity towards FAD-capped RNAs. Exhibits decapping activity towards dpCoA-capped RNAs in vitro. The protein is Decapping and exoribonuclease protein of Mus musculus (Mouse).